The chain runs to 286 residues: Thymidylate synthase (286 aa).

Arg-140 to Arg-141 lines the dUMP pocket. The Nucleophile role is filled by Cys-161. DUMP-binding positions include Arg-185–Asp-188, Asn-196, and His-226–Tyr-228. Asp-188 serves as a coordination point for (6R)-5,10-methylene-5,6,7,8-tetrahydrofolate. Ala-285 is a binding site for (6R)-5,10-methylene-5,6,7,8-tetrahydrofolate.

Belongs to the thymidylate synthase family. Bacterial-type ThyA subfamily. As to quaternary structure, homodimer.

Its subcellular location is the cytoplasm. It catalyses the reaction dUMP + (6R)-5,10-methylene-5,6,7,8-tetrahydrofolate = 7,8-dihydrofolate + dTMP. The protein operates within pyrimidine metabolism; dTTP biosynthesis. Catalyzes the reductive methylation of 2'-deoxyuridine-5'-monophosphate (dUMP) to 2'-deoxythymidine-5'-monophosphate (dTMP) while utilizing 5,10-methylenetetrahydrofolate (mTHF) as the methyl donor and reductant in the reaction, yielding dihydrofolate (DHF) as a by-product. This enzymatic reaction provides an intracellular de novo source of dTMP, an essential precursor for DNA biosynthesis. The chain is Thymidylate synthase from Streptococcus thermophilus (strain CNRZ 1066).